A 435-amino-acid polypeptide reads, in one-letter code: 3-phosphoshikimate 1-carboxyvinyltransferase (435 aa).

Residues K15, S16, and R20 each contribute to the 3-phosphoshikimate site. K15 is a phosphoenolpyruvate binding site. Phosphoenolpyruvate-binding residues include G96 and R124. Residues S169, Q171, S195, D319, and K346 each contribute to the 3-phosphoshikimate site. Phosphoenolpyruvate is bound at residue Q171. D319 (proton acceptor) is an active-site residue. R350 and R395 together coordinate phosphoenolpyruvate.

The protein belongs to the EPSP synthase family. In terms of assembly, monomer.

Its subcellular location is the cytoplasm. It carries out the reaction 3-phosphoshikimate + phosphoenolpyruvate = 5-O-(1-carboxyvinyl)-3-phosphoshikimate + phosphate. Its pathway is metabolic intermediate biosynthesis; chorismate biosynthesis; chorismate from D-erythrose 4-phosphate and phosphoenolpyruvate: step 6/7. Catalyzes the transfer of the enolpyruvyl moiety of phosphoenolpyruvate (PEP) to the 5-hydroxyl of shikimate-3-phosphate (S3P) to produce enolpyruvyl shikimate-3-phosphate and inorganic phosphate. The sequence is that of 3-phosphoshikimate 1-carboxyvinyltransferase from Chlorobium phaeobacteroides (strain BS1).